A 62-amino-acid polypeptide reads, in one-letter code: Alpha-conotoxin-like Ca1.1 (62 aa).

The signal sequence occupies residues 1 to 21; sequence MGMRMMFTVFLLVVLATTVVS. The propeptide occupies 22-46; that stretch reads FTSDRASDGRNAAANAFDLIALIAR. Q47 is subject to Pyrrolidone carboxylic acid. 2 disulfides stabilise this stretch: C49–C55 and C50–C61.

It belongs to the conotoxin A superfamily. Expressed by the venom duct.

The protein resides in the secreted. Functionally, alpha-conotoxins act on postsynaptic membranes, they bind to the nicotinic acetylcholine receptors (nAChR) and thus inhibit them. The polypeptide is Alpha-conotoxin-like Ca1.1 (Conus caracteristicus (Characteristic cone)).